Here is a 342-residue protein sequence, read N- to C-terminus: Phosphate acyltransferase (342 aa).

It belongs to the PlsX family. Homodimer. Probably interacts with PlsY.

The protein localises to the cytoplasm. The catalysed reaction is a fatty acyl-[ACP] + phosphate = an acyl phosphate + holo-[ACP]. Its pathway is lipid metabolism; phospholipid metabolism. In terms of biological role, catalyzes the reversible formation of acyl-phosphate (acyl-PO(4)) from acyl-[acyl-carrier-protein] (acyl-ACP). This enzyme utilizes acyl-ACP as fatty acyl donor, but not acyl-CoA. This chain is Phosphate acyltransferase, found in Alkalilimnicola ehrlichii (strain ATCC BAA-1101 / DSM 17681 / MLHE-1).